A 96-amino-acid chain; its full sequence is Large ribosomal subunit protein bL27 (96 aa).

Residues 1-9 constitute a propeptide that is removed on maturation; sequence MLRLDLQFF. Residues 1 to 36 are disordered; sequence MLRLDLQFFSTKKGQGSSKNGRDSESKRLGSKRADG. Positions 8-19 are enriched in polar residues; sequence FFSTKKGQGSSK. Over residues 20 to 35 the composition is skewed to basic and acidic residues; it reads NGRDSESKRLGSKRAD.

This sequence belongs to the bacterial ribosomal protein bL27 family. In terms of processing, the N-terminus is cleaved by ribosomal processing cysteine protease Prp.

The polypeptide is Large ribosomal subunit protein bL27 (Oceanobacillus iheyensis (strain DSM 14371 / CIP 107618 / JCM 11309 / KCTC 3954 / HTE831)).